Reading from the N-terminus, the 407-residue chain is Arginine biosynthesis bifunctional protein ArgJ (407 aa).

Positions 157, 183, 194, 280, 402, and 407 each coordinate substrate. Catalysis depends on Thr194, which acts as the Nucleophile.

The protein belongs to the ArgJ family. In terms of assembly, heterotetramer of two alpha and two beta chains.

It localises to the cytoplasm. The catalysed reaction is N(2)-acetyl-L-ornithine + L-glutamate = N-acetyl-L-glutamate + L-ornithine. The enzyme catalyses L-glutamate + acetyl-CoA = N-acetyl-L-glutamate + CoA + H(+). The protein operates within amino-acid biosynthesis; L-arginine biosynthesis; L-ornithine and N-acetyl-L-glutamate from L-glutamate and N(2)-acetyl-L-ornithine (cyclic): step 1/1. Its pathway is amino-acid biosynthesis; L-arginine biosynthesis; N(2)-acetyl-L-ornithine from L-glutamate: step 1/4. Its function is as follows. Catalyzes two activities which are involved in the cyclic version of arginine biosynthesis: the synthesis of N-acetylglutamate from glutamate and acetyl-CoA as the acetyl donor, and of ornithine by transacetylation between N(2)-acetylornithine and glutamate. This chain is Arginine biosynthesis bifunctional protein ArgJ, found in Oceanobacillus iheyensis (strain DSM 14371 / CIP 107618 / JCM 11309 / KCTC 3954 / HTE831).